We begin with the raw amino-acid sequence, 259 residues long: Protein unc-50 homolog (259 aa).

Met1 is subject to N-acetylmethionine. The segment covering 1–17 (MLPSTSVNSPAQGNGVL) has biased composition (polar residues). Positions 1–22 (MLPSTSVNSPAQGNGVLSSRDA) are disordered. Over 1–82 (MLPSTSVNSP…TKDQWARDDP (82 aa)) the chain is Cytoplasmic. Ser6 carries the post-translational modification Phosphoserine. Residues 83-103 (AFLVLLSIWLCVSTIGFGFVL) traverse the membrane as a helical segment. Residues 104–115 (DMGFFETIKLLL) are Lumenal-facing. A helical transmembrane segment spans residues 116-136 (WVVFIDCVGVGLLISTLMWFI). Residues 137–163 (SNKYLVKRQSRDYDVEWGYAFDVHLNA) are Cytoplasmic-facing. Residues 164-184 (FYPLLVILHFIQLFFINHVIL) traverse the membrane as a helical segment. Residues 185-187 (TDT) are Lumenal-facing. The chain crosses the membrane as a helical span at residues 188–208 (FIGYLVGNTLWLVAVGYYIYV). Over 209–222 (TFLGYSALPFLKNT) the chain is Cytoplasmic. Residues 223 to 243 (VILLYPFAPLILLYGLSLALG) form a helical membrane-spanning segment. At 244 to 259 (WNFTHTLCSFYKYRVK) the chain is on the lumenal side.

This sequence belongs to the unc-50 family.

The protein localises to the nucleus inner membrane. The protein resides in the golgi apparatus membrane. Functionally, involved in the cell surface expression of neuronal nicotinic receptors. Binds RNA. The sequence is that of Protein unc-50 homolog (UNC50) from Bos taurus (Bovine).